The sequence spans 433 residues: Putative ankyrin repeat protein R784 (433 aa).

ANK repeat units lie at residues 44-70 (NQNL…KTDV), 71-101 (NGLK…NNDL), 102-131 (LDLH…IVII), 179-205 (FYDS…NQCS), 206-235 (VRQK…RIFS), 237-264 (RRLI…IDLA), 265-294 (QNNF…DIHF), 296-321 (NGEC…NKVY), 322-351 (MSEK…ACMS), and 380-409 (NMRK…KLRE).

In Acanthamoeba polyphaga mimivirus (APMV), this protein is Putative ankyrin repeat protein R784.